The following is a 215-amino-acid chain: MILLKRMRDDIKMVFEQDPAARSTLEVITTYAGLHAVWSHLIAHKLYNQKKYVAARAISQISRFFTGIEIHPGAKIGKRLFIDHGMGVVIGETCTIGDNVTIYQGVTLGGTGKERGKRHPDIGDNVLIAAGAKVLGNIKINSNVNIGANSVVLQSVPSYSTVVGIPGHIVKQDGVRVGKTFDHRHLPDPIYEQIKHLERQLEKTRNGEIQDDYII.

It belongs to the transferase hexapeptide repeat family.

Its subcellular location is the cytoplasm. The catalysed reaction is L-serine + acetyl-CoA = O-acetyl-L-serine + CoA. It functions in the pathway amino-acid biosynthesis; L-cysteine biosynthesis; L-cysteine from L-serine: step 1/2. This Staphylococcus aureus (strain MRSA252) protein is Serine acetyltransferase (cysE).